A 523-amino-acid chain; its full sequence is Xanthotoxin 5-hydroxylase CYP82C2 (523 aa).

Residues 1-21 (MDTSLFSLFVPILVFVFIALF) form a helical membrane-spanning segment. Heme is bound at residue cysteine 462.

This sequence belongs to the cytochrome P450 family. Requires heme as cofactor.

The protein resides in the membrane. The enzyme catalyses xanthotoxin + reduced [NADPH--hemoprotein reductase] + O2 = 5-hydroxyxanthotoxin + oxidized [NADPH--hemoprotein reductase] + H2O + 2 H(+). It catalyses the reaction indole-3-carbonyl nitrile + reduced [NADPH--hemoprotein reductase] + O2 = 4-hydroxy-indole-3-carbonyl nitrile + oxidized [NADPH--hemoprotein reductase] + H2O + H(+). Its function is as follows. Involved in the biosynthetic pathway to 4-hydroxyindole-3-carbonyl nitrile (4-OH-ICN), a cyanogenic metabolite required for inducible pathogen defense. Converts indole-3-carbonyl nitrile (ICN) into 4-OH-ICN. Can hydroxylate xanthotoxin (8-methoxypsoralen) to form 5-hydroxyxanthotoxin (5-hydroxy-8-methoxypsoralen) in vivo and in vitro. This is Xanthotoxin 5-hydroxylase CYP82C2 from Arabidopsis thaliana (Mouse-ear cress).